The chain runs to 442 residues: Proline--tRNA ligase (442 aa).

Belongs to the class-II aminoacyl-tRNA synthetase family. ProS type 2 subfamily. As to quaternary structure, homodimer.

It is found in the cytoplasm. It catalyses the reaction tRNA(Pro) + L-proline + ATP = L-prolyl-tRNA(Pro) + AMP + diphosphate. In terms of biological role, catalyzes the attachment of proline to tRNA(Pro) in a two-step reaction: proline is first activated by ATP to form Pro-AMP and then transferred to the acceptor end of tRNA(Pro). This Brucella abortus (strain S19) protein is Proline--tRNA ligase.